Here is a 1399-residue protein sequence, read N- to C-terminus: DNA-directed RNA polymerase subunit beta' (1399 aa).

Zn(2+)-binding residues include Cys71, Cys73, Cys86, and Cys89. The Mg(2+) site is built by Asp462, Asp464, and Asp466. Zn(2+) is bound by residues Cys810, Cys884, Cys891, and Cys894. Residues 1376–1399 (EREKQAAITPAAPEAEPLALPPAE) form a disordered region.

It belongs to the RNA polymerase beta' chain family. As to quaternary structure, the RNAP catalytic core consists of 2 alpha, 1 beta, 1 beta' and 1 omega subunit. When a sigma factor is associated with the core the holoenzyme is formed, which can initiate transcription. Requires Mg(2+) as cofactor. The cofactor is Zn(2+).

The enzyme catalyses RNA(n) + a ribonucleoside 5'-triphosphate = RNA(n+1) + diphosphate. Functionally, DNA-dependent RNA polymerase catalyzes the transcription of DNA into RNA using the four ribonucleoside triphosphates as substrates. The polypeptide is DNA-directed RNA polymerase subunit beta' (Afipia carboxidovorans (strain ATCC 49405 / DSM 1227 / KCTC 32145 / OM5) (Oligotropha carboxidovorans)).